A 312-amino-acid chain; its full sequence is Pre-mRNA-splicing factor 38A (312 aa).

The segment at 1 to 179 (MANRTVKDAH…VLEETEQLDP (179 aa)) is N-terminal protein interaction domain. The disordered stretch occupies residues 180–312 (RVSALEEDMD…SHKKSRRGNE (133 aa)). Positions 184 to 201 (LEEDMDDVESSEEEEDDD) are enriched in acidic residues. Positions 202-223 (EKGRDPSPEHHRRNYRDLDRPR) are enriched in basic and acidic residues. Basic residues-rich tracts occupy residues 224–294 (RSPS…RSHS) and 301–312 (KKSHKKSRRGNE).

The protein belongs to the PRP38 family. In terms of assembly, component of the spliceosome B complex.

It is found in the nucleus. In terms of biological role, involved in pre-mRNA splicing as a component of the spliceosome. This is Pre-mRNA-splicing factor 38A (prpf38a) from Xenopus laevis (African clawed frog).